The sequence spans 353 residues: DNA integrity scanning protein DisA (353 aa).

The 139-residue stretch at 6–144 (DKELMNILKI…GGIKYVLRDS (139 aa)) folds into the DAC domain. Residues Gly-73, Leu-91, and 104–108 (TRHRT) contribute to the ATP site.

This sequence belongs to the DisA family. As to quaternary structure, homooctamer. Requires Mg(2+) as cofactor.

The enzyme catalyses 2 ATP = 3',3'-c-di-AMP + 2 diphosphate. Its function is as follows. Participates in a DNA-damage check-point that is active prior to asymmetric division when DNA is damaged. DisA forms globular foci that rapidly scan along the chromosomes during sporulation, searching for lesions. When a lesion is present, DisA pauses at the lesion site. This triggers a cellular response that culminates in a temporary block in sporulation initiation. Also has diadenylate cyclase activity, catalyzing the condensation of 2 ATP molecules into cyclic di-AMP (c-di-AMP). c-di-AMP acts as a signaling molecule that couples DNA integrity with progression of sporulation. The rise in c-di-AMP level generated by DisA while scanning the chromosome, operates as a positive signal that advances sporulation; upon encountering a lesion, the DisA focus arrests at the damaged site and halts c-di-AMP synthesis. The polypeptide is DNA integrity scanning protein DisA (Clostridium botulinum (strain Kyoto / Type A2)).